A 159-amino-acid chain; its full sequence is 17 kDa surface antigen (159 aa).

The N-terminal stretch at 1 to 19 (MKLLSKIMIIALAASMLQA) is a signal peptide. The N-palmitoyl cysteine moiety is linked to residue C20. C20 carries S-diacylglycerol cysteine lipidation.

This sequence belongs to the rickettsiale 17 kDa surface antigen family.

The protein localises to the cell outer membrane. The sequence is that of 17 kDa surface antigen (omp) from Rickettsia felis (strain ATCC VR-1525 / URRWXCal2) (Rickettsia azadi).